The sequence spans 1076 residues: GPI inositol-deacylase A (1076 aa).

The helical transmembrane segment at 3-23 (IATFPALAITALALVLWATVA) threads the bilayer. Asn-48 and Asn-119 each carry an N-linked (GlcNAc...) asparagine glycan. The active site involves Ser-240. The N-linked (GlcNAc...) asparagine glycan is linked to Asn-404. A run of 2 helical transmembrane segments spans residues 765 to 785 (FLGFYRVMFAIFPMFVFLCLL) and 815 to 835 (WILAGSCAIPFVPHVLVSLLY). Residue Asn-849 is glycosylated (N-linked (GlcNAc...) asparagine). 3 consecutive transmembrane segments (helical) span residues 855–875 (FLGPVSLVIATGIVVVLHWLL), 877–897 (ILTLWVCQCYYMLGLAPIAPE), and 910–930 (FLLLLVFKIVPHQFAFMVAVL). 2 N-linked (GlcNAc...) asparagine glycosylation sites follow: Asn-952 and Asn-966. The next 3 membrane-spanning stretches (helical) occupy residues 970-990 (SLLLLLVLLLPINAPTLVVWL), 1006-1026 (EVSAILPILLLVLTASRGIMI), and 1035-1055 (IYATFAFLAYFALFVLFHGVV).

The protein belongs to the GPI inositol-deacylase family.

The protein localises to the endoplasmic reticulum membrane. In terms of biological role, involved in inositol deacylation of GPI-anchored proteins which plays important roles in the quality control and ER-associated degradation of GPI-anchored proteins. The chain is GPI inositol-deacylase A (BST1A) from Yarrowia lipolytica (strain CLIB 122 / E 150) (Yeast).